The sequence spans 312 residues: R2-like ligand binding oxidase (312 aa).

Mn(2+)-binding residues include Glu68, Glu101, and His104. A cross-link (3-(O4'-tyrosyl)-valine (Val-Tyr)) is located at residues 71–162 (VTQDIQPFMA…QAQVRASVTY (92 aa)). Fe cation is bound at residue Glu101. Residues Glu167, Glu202, and His205 each contribute to the Fe cation site.

It belongs to the ribonucleoside diphosphate reductase small chain family. R2-like ligand binding oxidase subfamily. Homodimer. It depends on Fe cation as a cofactor. The cofactor is Mn(2+).

Probable oxidase that might be involved in lipid metabolism. This is R2-like ligand binding oxidase from Mycolicibacterium gilvum (strain PYR-GCK) (Mycobacterium gilvum (strain PYR-GCK)).